Consider the following 186-residue polypeptide: MLDQTNYTPRLKAAYANTVRAAMKEEFGYKNDMQIPRLDKIVLNMGVGEAVKDTKKVKTAAEELSMIAGQKAVVTHAKKSIAGFRVREQMPLGCKVTLRGDRMYEFLDRLITIALPRVRDFRGVKGNSFDGRGNYAMGLKEQFVFPEINFDKVDEVLGMDIIICTTAKTDAEAKALLKQFNMPFIS.

It belongs to the universal ribosomal protein uL5 family. As to quaternary structure, part of the 50S ribosomal subunit; part of the 5S rRNA/L5/L18/L25 subcomplex. Contacts the 5S rRNA and the P site tRNA. Forms a bridge to the 30S subunit in the 70S ribosome.

Its function is as follows. This is one of the proteins that bind and probably mediate the attachment of the 5S RNA into the large ribosomal subunit, where it forms part of the central protuberance. In the 70S ribosome it contacts protein S13 of the 30S subunit (bridge B1b), connecting the 2 subunits; this bridge is implicated in subunit movement. Contacts the P site tRNA; the 5S rRNA and some of its associated proteins might help stabilize positioning of ribosome-bound tRNAs. The protein is Large ribosomal subunit protein uL5 of Cereibacter sphaeroides (strain ATCC 17029 / ATH 2.4.9) (Rhodobacter sphaeroides).